Here is a 1889-residue protein sequence, read N- to C-terminus: Treslin (1889 aa).

Phosphoserine occurs at positions 295, 599, 820, 861, 919, 934, 1002, 1027, and 1078. Positions 812–832 are enriched in low complexity; the sequence is DSMSQESMSPPPSSSTHRSVS. The interval 812–836 is disordered; it reads DSMSQESMSPPPSSSTHRSVSAITE. The interval 979-1063 is disordered; that stretch reads RLLHRQIKGR…RENFPVQSIQ (85 aa). Over residues 1020-1050 the composition is skewed to polar residues; sequence LSFSRTNSGSFYSVSQPKSRSVQRIHSSQQE. Disordered regions lie at residues 1098 to 1421, 1471 to 1508, 1520 to 1543, 1630 to 1714, 1730 to 1751, and 1841 to 1875; these read EIST…SQFS, LPGE…SSSE, GKQR…SPQT, SCTP…SLEQ, VCQL…ETSW, and QGRT…TLSR. Polar residues predominate over residues 1127–1179; sequence TAQTLLYTPERLQNSPTEMTSAEGTISEATIKTPSSHGYNSPFASKVTSQKTV. Thr1134 carries the post-translational modification Phosphothreonine. The residue at position 1141 (Ser1141) is a Phosphoserine. Residues 1187–1197 show a composition bias toward low complexity; it reads SPPLTKLPSTP. Over residues 1203 to 1219 the composition is skewed to polar residues; the sequence is QPPQCSSDCTWPHSVNS. A compositionally biased stretch (low complexity) spans 1339–1351; that stretch reads TSPSVTSSVSCPV. Residues 1373–1382 show a composition bias toward basic residues; the sequence is KLRRSCRKKS. Residue Ser1406 is modified to Phosphoserine. A compositionally biased stretch (low complexity) spans 1496–1508; that stretch reads LVPAPSSVSSSSE. Composition is skewed to polar residues over residues 1525–1543 and 1652–1662; these read DAAQ…SPQT and WTPSPKQSGKT. A compositionally biased stretch (basic and acidic residues) spans 1705 to 1714; it reads PEGKERSLEQ.

It belongs to the treslin family. Interacts with TOPBP1 (via BRCT domains); interaction takes place in a CDK2-dependent manner. Component of the replisome complex composed of at least DONSON, MCM2, MCM7, PCNA and TICRR.

The protein resides in the nucleus. Functionally, regulator of DNA replication and S/M and G2/M checkpoints. Regulates the triggering of DNA replication initiation via its interaction with TOPBP1 by participating in CDK2-mediated loading of CDC45L onto replication origins. Required for the transition from pre-replication complex (pre-RC) to pre-initiation complex (pre-IC). Required to prevent mitotic entry after treatment with ionizing radiation. The chain is Treslin (Ticrr) from Mus musculus (Mouse).